Reading from the N-terminus, the 648-residue chain is Chaperone protein HtpG (648 aa).

Positions 1-353 (MNARVEQLEF…AQDMSLNVSR (353 aa)) are a; substrate-binding. Residues 354-567 (EILQQDRQIK…TFGITPALAR (214 aa)) are b. Positions 568–648 (IYRATGQDVP…LLADRLTRTL (81 aa)) are c.

This sequence belongs to the heat shock protein 90 family. Homodimer.

The protein localises to the cytoplasm. In terms of biological role, molecular chaperone. Has ATPase activity. The chain is Chaperone protein HtpG from Mycobacterium ulcerans (strain Agy99).